Reading from the N-terminus, the 176-residue chain is Sperm-egg fusion protein TMEM95 (176 aa).

Residues 1–16 form the signal peptide; the sequence is MWVLALGGAFLAVAKA. 4 cysteine pairs are disulfide-bonded: C17–C119, C20–C122, C106–C129, and C110–C135. The Extracellular portion of the chain corresponds to 17–146; sequence CIFCRLQDHA…PDSHDLWDAR (130 aa). Residues N36 and N118 are each glycosylated (N-linked (GlcNAc...) asparagine). The helical transmembrane segment at 147–167 threads the bilayer; sequence ILLLCIFGIVLLSGVVSLQVE. Topologically, residues 168-176 are cytoplasmic; it reads YLNLQAKDL.

It belongs to the TMEM95 family. In terms of assembly, does not interact with sperm-egg fusion proteins IZUMO1 or IZUMO1R/JUNO. In terms of processing, N-glycosylated. Expressed exclusively in testis.

Its subcellular location is the cytoplasmic vesicle. The protein resides in the secretory vesicle. The protein localises to the acrosome membrane. Sperm protein required for fusion of sperm with the egg membrane during fertilization. The sequence is that of Sperm-egg fusion protein TMEM95 from Mus musculus (Mouse).